The primary structure comprises 167 residues: Endothelin-3 (167 aa).

Positions 1-19 (MELGLWLLLGLTVTSAAAA) are cleaved as a signal peptide. Residues 20 to 50 (LPAQPGNAGQERGPGRSGDQEEKRVPAHHRP) constitute a propeptide that is removed on maturation. The interval 22-45 (AQPGNAGQERGPGRSGDQEEKRVP) is disordered. 2 disulfide bridges follow: Cys53–Cys67 and Cys55–Cys63. Positions 74 to 167 (INTPEQTVPY…KSRTDKVHQP (94 aa)) are excised as a propeptide. The tract at residues 85–112 (LSNHRGSLRGKRSSGPVPESSQSSPQTR) is disordered. Residues 97 to 109 (SSGPVPESSQSSP) show a composition bias toward low complexity. Positions 115 to 135 (CACSGVDDKACAYFCAHVTSY) are endothelin-like. Residues 140–149 (EKAAAEEKQE) show a composition bias toward basic and acidic residues. The interval 140 to 167 (EKAAAEEKQETGGPRQRLKSRTDKVHQP) is disordered.

It belongs to the endothelin/sarafotoxin family.

The protein resides in the secreted. Functionally, endothelins are endothelium-derived vasoconstrictor peptides. The sequence is that of Endothelin-3 (Edn3) from Rattus norvegicus (Rat).